A 468-amino-acid chain; its full sequence is MVGRMCVAVLIVLLLVATAGADPNGAETLKENPELPVDFVWALICGFLVMFMQAGFAMLEAGFSRAKNVANVMMKNLMDFAVGSLAFFAVGFALMMGADWQGIAGTTGWFLAGESYDVSTIELWFFMLVFAATAATIVSGSIAERPKFSVYLVYSAVVSAVIYPIYGHWLWGGGWLSSSEFMVKLGGGYGALDFAGSGVVHALGGYIALAAVMLLGPRLGKYDSDGNPRAIPGHNLAFAVIGTFILWFGWFGFNAGSTLSAHELRVSIIASNTNLAAAAGAVTAMAITWLRNGKPDVGMTCNGAVAGLVAITAPCAWVQPWSSVVIGTIAGFIATYGYWWLEKRGLDDVVGAIPVHGFSGTWGLIALGIFADGSYGLYATESPLVTGLLYGNWGFFIVQLISAIVNFAWAFGTGFALFWILKKVIGIRVSPEEEMLGLDIAEHAAVAYPNFVCTETELPLAMKQGGGR.

The next 12 helical transmembrane spans lie at methionine 1–alanine 21, phenylalanine 39–leucine 59, leucine 77–glycine 97, leucine 123–alanine 143, alanine 156–leucine 176, phenylalanine 194–leucine 214, leucine 236–glycine 256, isoleucine 268–threonine 288, valine 297–tryptophan 317, tryptophan 321–leucine 341, valine 350–phenylalanine 370, and leucine 400–isoleucine 420.

It belongs to the ammonia transporter channel (TC 1.A.11.2) family. As to quaternary structure, homotrimer.

The protein resides in the cell membrane. Involved in the uptake of ammonium/ammonia (NH(4)(+)/NH(3)). Transport is electrogenic. In Archaeoglobus fulgidus (strain ATCC 49558 / DSM 4304 / JCM 9628 / NBRC 100126 / VC-16), this protein is Ammonium transporter Amt2.